The sequence spans 343 residues: Aspartate carbamoyltransferase catalytic subunit (343 aa).

The carbamoyl phosphate site is built by Arg91 and Thr92. Lys119 is an L-aspartate binding site. Carbamoyl phosphate contacts are provided by Arg141, His171, and Gln174. Residues Arg204 and Arg259 each coordinate L-aspartate. Carbamoyl phosphate-binding residues include Gly300 and Pro301.

Belongs to the aspartate/ornithine carbamoyltransferase superfamily. ATCase family. As to quaternary structure, heterododecamer (2C3:3R2) of six catalytic PyrB chains organized as two trimers (C3), and six regulatory PyrI chains organized as three dimers (R2).

The enzyme catalyses carbamoyl phosphate + L-aspartate = N-carbamoyl-L-aspartate + phosphate + H(+). The protein operates within pyrimidine metabolism; UMP biosynthesis via de novo pathway; (S)-dihydroorotate from bicarbonate: step 2/3. Its function is as follows. Catalyzes the condensation of carbamoyl phosphate and aspartate to form carbamoyl aspartate and inorganic phosphate, the committed step in the de novo pyrimidine nucleotide biosynthesis pathway. This is Aspartate carbamoyltransferase catalytic subunit from Burkholderia multivorans (strain ATCC 17616 / 249).